The sequence spans 319 residues: Cobalamin biosynthesis protein CbiB (319 aa).

Transmembrane regions (helical) follow at residues 56–76 (VMWVVVVGVTWGVAWGVLALA), 82–102 (WFGWSVEVWMIFTTLAGRSLA), 153–173 (VDGIIAPLFFLFLGGAPLAMA), and 296–316 (LMWVASTLALALFIAARCGLS).

This sequence belongs to the CobD/CbiB family.

It is found in the cell membrane. It participates in cofactor biosynthesis; adenosylcobalamin biosynthesis. Converts cobyric acid to cobinamide by the addition of aminopropanol on the F carboxylic group. However, the true cosubstrate could be (R)-1-amino-2-propanol O-2-phosphate, leading to cobinamide phosphate. This is Cobalamin biosynthesis protein CbiB from Salmonella paratyphi A (strain ATCC 9150 / SARB42).